The sequence spans 521 residues: ATP synthase subunit beta (521 aa).

Low complexity-rich tracts occupy residues 1-21 (MAKAATPKTTAAAEAKPAAKA) and 28-42 (PKTTAAAKPAATKSG). A disordered region spans residues 1 to 42 (MAKAATPKTTAAAEAKPAAKAPAKKAAPKTTAAAKPAATKSG). 199–206 (GGAGVGKT) contributes to the ATP binding site.

Belongs to the ATPase alpha/beta chains family. F-type ATPases have 2 components, CF(1) - the catalytic core - and CF(0) - the membrane proton channel. CF(1) has five subunits: alpha(3), beta(3), gamma(1), delta(1), epsilon(1). CF(0) has three main subunits: a(1), b(2) and c(9-12). The alpha and beta chains form an alternating ring which encloses part of the gamma chain. CF(1) is attached to CF(0) by a central stalk formed by the gamma and epsilon chains, while a peripheral stalk is formed by the delta and b chains.

It is found in the cell inner membrane. It catalyses the reaction ATP + H2O + 4 H(+)(in) = ADP + phosphate + 5 H(+)(out). Functionally, produces ATP from ADP in the presence of a proton gradient across the membrane. The catalytic sites are hosted primarily by the beta subunits. This Brucella canis (strain ATCC 23365 / NCTC 10854 / RM-666) protein is ATP synthase subunit beta.